The primary structure comprises 328 residues: Mitochondrial GTPase 1 (328 aa).

One can recognise a CP-type G domain in the interval Lys10–Pro199. Residues Asn57–Asp60, Asn143–Ser148, and Gly195 each bind GTP.

Belongs to the TRAFAC class YlqF/YawG GTPase family. MTG1 subfamily.

The protein resides in the mitochondrion inner membrane. Its function is as follows. Mitochondrial GTPase involved in assembly of the large ribosomal subunit. Plays a role in expression of the mitochondrial translational machinery. This chain is Mitochondrial GTPase 1, found in Schizosaccharomyces japonicus (strain yFS275 / FY16936) (Fission yeast).